Reading from the N-terminus, the 913-residue chain is Isoleucine--tRNA ligase (913 aa).

Positions 57 to 67 (PYANGDIHLGT) match the 'HIGH' region motif. Residue Glu-549 coordinates L-isoleucyl-5'-AMP. Positions 590-594 (KMSKS) match the 'KMSKS' region motif. Residue Lys-593 coordinates ATP. Cys-881, Cys-884, Cys-901, and Cys-904 together coordinate Zn(2+).

This sequence belongs to the class-I aminoacyl-tRNA synthetase family. IleS type 1 subfamily. As to quaternary structure, monomer. Zn(2+) serves as cofactor.

It localises to the cytoplasm. The enzyme catalyses tRNA(Ile) + L-isoleucine + ATP = L-isoleucyl-tRNA(Ile) + AMP + diphosphate. Its function is as follows. Catalyzes the attachment of isoleucine to tRNA(Ile). As IleRS can inadvertently accommodate and process structurally similar amino acids such as valine, to avoid such errors it has two additional distinct tRNA(Ile)-dependent editing activities. One activity is designated as 'pretransfer' editing and involves the hydrolysis of activated Val-AMP. The other activity is designated 'posttransfer' editing and involves deacylation of mischarged Val-tRNA(Ile). This chain is Isoleucine--tRNA ligase, found in Fervidobacterium nodosum (strain ATCC 35602 / DSM 5306 / Rt17-B1).